A 317-amino-acid polypeptide reads, in one-letter code: Acetyl-coenzyme A carboxylase carboxyl transferase subunit alpha (317 aa).

A CoA carboxyltransferase C-terminal domain is found at 40–293; the sequence is LEGRVRDAMV…EAVIGDALKE (254 aa).

Belongs to the AccA family. As to quaternary structure, acetyl-CoA carboxylase is a heterohexamer composed of biotin carboxyl carrier protein (AccB), biotin carboxylase (AccC) and two subunits each of ACCase subunit alpha (AccA) and ACCase subunit beta (AccD).

Its subcellular location is the cytoplasm. It catalyses the reaction N(6)-carboxybiotinyl-L-lysyl-[protein] + acetyl-CoA = N(6)-biotinyl-L-lysyl-[protein] + malonyl-CoA. It functions in the pathway lipid metabolism; malonyl-CoA biosynthesis; malonyl-CoA from acetyl-CoA: step 1/1. In terms of biological role, component of the acetyl coenzyme A carboxylase (ACC) complex. First, biotin carboxylase catalyzes the carboxylation of biotin on its carrier protein (BCCP) and then the CO(2) group is transferred by the carboxyltransferase to acetyl-CoA to form malonyl-CoA. The polypeptide is Acetyl-coenzyme A carboxylase carboxyl transferase subunit alpha (Sinorhizobium medicae (strain WSM419) (Ensifer medicae)).